The following is a 229-amino-acid chain: Uracil-DNA glycosylase (229 aa).

D64 (proton acceptor) is an active-site residue.

This sequence belongs to the uracil-DNA glycosylase (UDG) superfamily. UNG family.

The protein resides in the cytoplasm. It carries out the reaction Hydrolyzes single-stranded DNA or mismatched double-stranded DNA and polynucleotides, releasing free uracil.. Functionally, excises uracil residues from the DNA which can arise as a result of misincorporation of dUMP residues by DNA polymerase or due to deamination of cytosine. This Klebsiella pneumoniae subsp. pneumoniae (strain ATCC 700721 / MGH 78578) protein is Uracil-DNA glycosylase.